We begin with the raw amino-acid sequence, 256 residues long: Protein crossbronx-like (256 aa).

A UBC core domain is found at 17–179 (NQGYKVLAEY…AKVSILWSCQ (163 aa)).

Belongs to the ubiquitin-conjugating enzyme family. FTS subfamily.

This Drosophila virilis (Fruit fly) protein is Protein crossbronx-like.